A 432-amino-acid polypeptide reads, in one-letter code: Adenylosuccinate synthetase (432 aa).

GTP contacts are provided by residues 12 to 18 and 40 to 42; these read GDEGKGK and GHT. Aspartate 13 functions as the Proton acceptor in the catalytic mechanism. The Mg(2+) site is built by aspartate 13 and glycine 40. IMP contacts are provided by residues 13 to 16, 38 to 41, threonine 132, arginine 146, glutamine 226, threonine 241, and arginine 305; these read DEGK and NAGH. Histidine 41 functions as the Proton donor in the catalytic mechanism. 301-307 serves as a coordination point for substrate; the sequence is VVTGRKR. GTP-binding positions include arginine 307, 333–335, and 415–417; these read KLD and STS.

This sequence belongs to the adenylosuccinate synthetase family. Homodimer. Mg(2+) is required as a cofactor.

The protein resides in the cytoplasm. The catalysed reaction is IMP + L-aspartate + GTP = N(6)-(1,2-dicarboxyethyl)-AMP + GDP + phosphate + 2 H(+). Its pathway is purine metabolism; AMP biosynthesis via de novo pathway; AMP from IMP: step 1/2. Plays an important role in the de novo pathway of purine nucleotide biosynthesis. Catalyzes the first committed step in the biosynthesis of AMP from IMP. The sequence is that of Adenylosuccinate synthetase from Mesorhizobium japonicum (strain LMG 29417 / CECT 9101 / MAFF 303099) (Mesorhizobium loti (strain MAFF 303099)).